The chain runs to 212 residues: MPGRFELKPTLEKVWHAPDNFRFMDPLPPMHRRGIIIAAIVLVVGFLLPSDDTPNAPVVTREAQLDIQSQSQPPTEEQLRAQLVTPQNDPDQVAPVAPEPIQEGQPEEQPQTTQTQPFQPDSGIDNQWRSYRVEPGKTMAQLFRDHGLPATDVYAMAQVEGAGKPLSNLQNGQMVKIRQNASGVVTGLTIDTGNNQQVLFTRQPDGSFIRAR.

Residues Gly34–Ser50 traverse the membrane as a helical segment. Residues Asn88–Gln127 form a disordered region. Low complexity predominate over residues Glu99–Pro120. Positions Pro117–Arg212 are oapA.

Belongs to the OapA family.

The protein localises to the cell inner membrane. Its function is as follows. Cell division protein whose function is related to the generation of a transient cell wall structure. Function is linked to the late stages of cell division. The chain is Cell division protein YtfB (ytfB) from Escherichia coli (strain K12).